Reading from the N-terminus, the 101-residue chain is Large ribosomal subunit protein bL28 (101 aa).

Belongs to the bacterial ribosomal protein bL28 family.

This is Large ribosomal subunit protein bL28 from Methylorubrum populi (strain ATCC BAA-705 / NCIMB 13946 / BJ001) (Methylobacterium populi).